The following is a 142-amino-acid chain: Large ribosomal subunit protein uL13 (142 aa).

It belongs to the universal ribosomal protein uL13 family. As to quaternary structure, part of the 50S ribosomal subunit.

Functionally, this protein is one of the early assembly proteins of the 50S ribosomal subunit, although it is not seen to bind rRNA by itself. It is important during the early stages of 50S assembly. The chain is Large ribosomal subunit protein uL13 from Xanthomonas oryzae pv. oryzae (strain MAFF 311018).